Reading from the N-terminus, the 568-residue chain is Keratin, type I cytoskeletal 10 (568 aa).

Over residues 1 to 15 (MSVRYSSSKQYSSSR) the composition is skewed to low complexity. A disordered region spans residues 1–31 (MSVRYSSSKQYSSSRSGGGGGGGGGSSFRIS). Residues 1–135 (MSVRYSSSKQ…GGDGGLLSGN (135 aa)) are head. A phosphoserine mark is found at serine 14, serine 16, serine 36, serine 47, serine 50, and serine 160. Positions 16–26 (SGGGGGGGGGS) are enriched in gly residues. The coil 1A stretch occupies residues 136 to 171 (EKVTMQNLNDRLASYLDKVRALEESNYELEGKIKEW). The IF rod domain maps to 136 to 450 (EKVTMQNLND…SLLEGEGSSG (315 aa)). A linker 1 region spans residues 172 to 192 (YEKHGNSSQRAPRDYSKYYQT). The segment at 193–284 (IEDLKNQILN…KNHEEEMRDL (92 aa)) is coil 1B. The interval 285-307 (QNVSTGDVNVEMNAAPGVDLTEL) is linker 12. The coil 2 stretch occupies residues 308–446 (LNNMRNQYEQ…QTYRSLLEGE (139 aa)). The segment at 447 to 568 (GSSGGGGYGG…GESSSKGPRY (122 aa)) is tail. Residues 485–546 (GGGSSGGGGH…GGGYGGGSSS (62 aa)) are compositionally biased toward gly residues. A disordered region spans residues 485 to 568 (GGGSSGGGGH…GESSSKGPRY (84 aa)). A compositionally biased stretch (low complexity) spans 547–568 (SGGHKSSSSGSVGESSSKGPRY).

The protein belongs to the intermediate filament family. In terms of assembly, heterotetramer of two type I and two type II keratins. Heterodimer with KRT1. Two heterodimers of KRT1 and KRT10 form a heterotetramer. The KRT10 subunit in the heterotetramer is probably disulfide-linked. As to expression, expressed in skin.

It is found in the secreted. It localises to the extracellular space. The protein localises to the cell surface. Its subcellular location is the cytoplasm. Its function is as follows. Plays a role in the establishment of the epidermal barrier on plantar skin. Involved in the maintenance of cell layer development and keratin filament bundles in suprabasal cells of the epithelium. In Canis lupus familiaris (Dog), this protein is Keratin, type I cytoskeletal 10.